Here is a 129-residue protein sequence, read N- to C-terminus: Follitropin subunit beta (129 aa).

Positions 1–20 are cleaved as a signal peptide; sequence MKSLQFCFLFCCWKAICCNS. 6 disulfide bridges follow: Cys21–Cys69, Cys35–Cys84, Cys38–Cys122, Cys46–Cys100, Cys50–Cys102, and Cys105–Cys112. N-linked (GlcNAc...) asparagine glycosylation is found at Asn25 and Asn42.

This sequence belongs to the glycoprotein hormones subunit beta family. In terms of assembly, heterodimer. The active follitropin is a heterodimer composed of an alpha chain/CGA shared with other hormones and a unique beta chain/FSHB shown here.

The protein localises to the secreted. Together with the alpha chain CGA constitutes follitropin, the follicle-stimulating hormone, and provides its biological specificity to the hormone heterodimer. Binds FSHR, a G protein-coupled receptor, on target cells to activate downstream signaling pathways. Follitropin is involved in follicle development and spermatogenesis in reproductive organs. This chain is Follitropin subunit beta (FSHB), found in Sus scrofa (Pig).